A 349-amino-acid polypeptide reads, in one-letter code: Isopentenyl-diphosphate delta-isomerase (349 aa).

A substrate-binding site is contributed by 9–10 (RK). FMN contacts are provided by residues 65 to 67 (AMT), S95, and N124. 95 to 97 (STH) provides a ligand contact to substrate. Q154 is a binding site for substrate. E155 is a binding site for Mg(2+). FMN-binding positions include K186, S211, T216, 262–264 (GLR), and 283–284 (SR).

This sequence belongs to the IPP isomerase type 2 family. Homooctamer. Dimer of tetramers. FMN is required as a cofactor. The cofactor is NADPH. It depends on Mg(2+) as a cofactor.

The protein resides in the cytoplasm. The catalysed reaction is isopentenyl diphosphate = dimethylallyl diphosphate. In terms of biological role, involved in the biosynthesis of isoprenoids. Catalyzes the 1,3-allylic rearrangement of the homoallylic substrate isopentenyl (IPP) to its allylic isomer, dimethylallyl diphosphate (DMAPP). The chain is Isopentenyl-diphosphate delta-isomerase from Staphylococcus aureus (strain JH1).